Reading from the N-terminus, the 316-residue chain is Protein lifeguard 2 (316 aa).

Residues 1–53 (MTQGKLSVANKAPGTEGQQQVHGEKKEAPAVPSAPPSYEEATSGEGMKAGAFP) form a disordered region. The next 3 helical transmembrane spans lie at 106–126 (VYTI…LFTF), 138–158 (PGWY…LACC), and 165–185 (FPWN…LTGM). N191 carries N-linked (GlcNAc...) asparagine glycosylation. A run of 4 helical transmembrane segments spans residues 194-214 (SVLL…VFSF), 225-245 (GVLF…AILL), 250-270 (VPWL…LFLA), and 290-310 (IFGA…FLQL).

This sequence belongs to the BI1 family. LFG subfamily. As to quaternary structure, interacts with FAS/TNFRSF6 and BAX.

It is found in the cell membrane. It localises to the membrane raft. Its subcellular location is the postsynaptic cell membrane. Its function is as follows. Antiapoptotic protein which protects cells uniquely from Fas-induced apoptosis. Regulates Fas-mediated apoptosis in neurons by interfering with caspase-8 activation. Plays a role in cerebellar development by affecting cerebellar size, internal granular layer (IGL) thickness, and Purkinje cell (PC) development. This chain is Protein lifeguard 2 (FAIM2), found in Pongo abelii (Sumatran orangutan).